Here is a 636-residue protein sequence, read N- to C-terminus: Chaperone protein HtpG (636 aa).

The interval 1-345 (MSESATANAN…SSDLPLNVSR (345 aa)) is a; substrate-binding. Residues 346 to 562 (EILQQSKDID…EHDPSGNLAR (217 aa)) are b. Residues 563–636 (LMKAAGQPMP…NDLMMALSAK (74 aa)) are c.

This sequence belongs to the heat shock protein 90 family. As to quaternary structure, homodimer.

Its subcellular location is the cytoplasm. Its function is as follows. Molecular chaperone. Has ATPase activity. This is Chaperone protein HtpG from Dechloromonas aromatica (strain RCB).